Here is a 759-residue protein sequence, read N- to C-terminus: Phosphoribosylformylglycinamidine synthase subunit PurL (759 aa).

His-61 is a catalytic residue. ATP-binding residues include Tyr-64 and Lys-105. Position 107 (Glu-107) interacts with Mg(2+). Residues 108–111 and Arg-130 each bind substrate; that span reads SHNH. Catalysis depends on His-109, which acts as the Proton acceptor. Asp-131 is a binding site for Mg(2+). Gln-260 contributes to the substrate binding site. A Mg(2+)-binding site is contributed by Asp-288. Position 332-334 (332-334) interacts with substrate; the sequence is ESQ. ATP contacts are provided by Asp-520 and Gly-557. Asn-558 serves as a coordination point for Mg(2+). Ser-560 serves as a coordination point for substrate.

It belongs to the FGAMS family. In terms of assembly, monomer. Part of the FGAM synthase complex composed of 1 PurL, 1 PurQ and 2 PurS subunits.

The protein resides in the cytoplasm. It catalyses the reaction N(2)-formyl-N(1)-(5-phospho-beta-D-ribosyl)glycinamide + L-glutamine + ATP + H2O = 2-formamido-N(1)-(5-O-phospho-beta-D-ribosyl)acetamidine + L-glutamate + ADP + phosphate + H(+). The protein operates within purine metabolism; IMP biosynthesis via de novo pathway; 5-amino-1-(5-phospho-D-ribosyl)imidazole from N(2)-formyl-N(1)-(5-phospho-D-ribosyl)glycinamide: step 1/2. In terms of biological role, part of the phosphoribosylformylglycinamidine synthase complex involved in the purines biosynthetic pathway. Catalyzes the ATP-dependent conversion of formylglycinamide ribonucleotide (FGAR) and glutamine to yield formylglycinamidine ribonucleotide (FGAM) and glutamate. The FGAM synthase complex is composed of three subunits. PurQ produces an ammonia molecule by converting glutamine to glutamate. PurL transfers the ammonia molecule to FGAR to form FGAM in an ATP-dependent manner. PurS interacts with PurQ and PurL and is thought to assist in the transfer of the ammonia molecule from PurQ to PurL. This is Phosphoribosylformylglycinamidine synthase subunit PurL from Thermoplasma volcanium (strain ATCC 51530 / DSM 4299 / JCM 9571 / NBRC 15438 / GSS1).